The chain runs to 377 residues: Chaperone protein DnaJ (377 aa).

In terms of domain architecture, J spans 5 to 70 (DYYEVLGVSR…DKKAAYDQFG (66 aa)). The CR-type zinc finger occupies 133–211 (GLTKELRIPT…CHGDGRVEKS (79 aa)). 8 residues coordinate Zn(2+): C146, C149, C163, C166, C185, C188, C199, and C202. CXXCXGXG motif repeat units lie at residues 146–153 (CDLCEGSG), 163–170 (CGTCHGQG), 185–192 (CPTCHGRG), and 199–206 (CSKCHGDG).

Belongs to the DnaJ family. As to quaternary structure, homodimer. Zn(2+) serves as cofactor.

It is found in the cytoplasm. Participates actively in the response to hyperosmotic and heat shock by preventing the aggregation of stress-denatured proteins and by disaggregating proteins, also in an autonomous, DnaK-independent fashion. Unfolded proteins bind initially to DnaJ; upon interaction with the DnaJ-bound protein, DnaK hydrolyzes its bound ATP, resulting in the formation of a stable complex. GrpE releases ADP from DnaK; ATP binding to DnaK triggers the release of the substrate protein, thus completing the reaction cycle. Several rounds of ATP-dependent interactions between DnaJ, DnaK and GrpE are required for fully efficient folding. Also involved, together with DnaK and GrpE, in the DNA replication of plasmids through activation of initiation proteins. The sequence is that of Chaperone protein DnaJ from Shewanella baltica (strain OS195).